The primary structure comprises 259 residues: Ribonuclease HII (259 aa).

Residues Val-69–Tyr-257 form the RNase H type-2 domain. Residues Asp-75, Glu-76, and Asp-167 each contribute to the a divalent metal cation site.

This sequence belongs to the RNase HII family. Requires Mn(2+) as cofactor. The cofactor is Mg(2+).

It is found in the cytoplasm. It carries out the reaction Endonucleolytic cleavage to 5'-phosphomonoester.. In terms of biological role, endonuclease that specifically degrades the RNA of RNA-DNA hybrids. This Shouchella clausii (strain KSM-K16) (Alkalihalobacillus clausii) protein is Ribonuclease HII.